The chain runs to 146 residues: uncharacterized protein (146 aa).

The first 24 residues, 1–24 (MVIYYGKKNCTLLLLLFILCNIYS), serve as a signal peptide directing secretion. N-linked (GlcNAc...) asparagine glycans are attached at residues asparagine 99 and asparagine 106.

This is an uncharacterized protein from Saccharomyces cerevisiae (strain ATCC 204508 / S288c) (Baker's yeast).